Here is a 488-residue protein sequence, read N- to C-terminus: Ribulose bisphosphate carboxylase large chain (488 aa).

N127 and T177 together coordinate substrate. The active-site Proton acceptor is the K179. K181 serves as a coordination point for substrate. K205, D207, and E208 together coordinate Mg(2+). The residue at position 205 (K205) is an N6-carboxylysine. H297 serves as the catalytic Proton acceptor. Substrate-binding residues include R298, H330, and S382.

This sequence belongs to the RuBisCO large chain family. Type I subfamily. Heterohexadecamer of 8 large chains and 8 small chains. Requires Mg(2+) as cofactor.

It localises to the plastid. It is found in the chloroplast. The enzyme catalyses 2 (2R)-3-phosphoglycerate + 2 H(+) = D-ribulose 1,5-bisphosphate + CO2 + H2O. It carries out the reaction D-ribulose 1,5-bisphosphate + O2 = 2-phosphoglycolate + (2R)-3-phosphoglycerate + 2 H(+). In terms of biological role, ruBisCO catalyzes two reactions: the carboxylation of D-ribulose 1,5-bisphosphate, the primary event in carbon dioxide fixation, as well as the oxidative fragmentation of the pentose substrate in the photorespiration process. Both reactions occur simultaneously and in competition at the same active site. The protein is Ribulose bisphosphate carboxylase large chain of Ectocarpus siliculosus (Brown alga).